A 230-amino-acid chain; its full sequence is MGQKVHPNGIRLGITKPWISTWYADKSDYANNLNSDWEVRKYLADKLQAASVSKIVIERPAKSIRVTIHTARPGVVIGKKGEDVEVLRAAVSKLAGTPAQINIAEIRKPELDAKLVADSIAQQLERRVMFRRAMKRAVQNAMRIGAQGIKVEVSGRLGGAEIARSEWYREGRVPLHTLRADIDYSTSESHTQYGVIGIKVWIFKGEVLDGMLPQIEEPKQQQPKRKPRGK.

The region spanning valine 39 to arginine 107 is the KH type-2 domain.

It belongs to the universal ribosomal protein uS3 family. In terms of assembly, part of the 30S ribosomal subunit. Forms a tight complex with proteins S10 and S14.

Its function is as follows. Binds the lower part of the 30S subunit head. Binds mRNA in the 70S ribosome, positioning it for translation. The chain is Small ribosomal subunit protein uS3 from Shewanella oneidensis (strain ATCC 700550 / JCM 31522 / CIP 106686 / LMG 19005 / NCIMB 14063 / MR-1).